A 238-amino-acid polypeptide reads, in one-letter code: Ribonuclease PH (238 aa).

Residues Arg86 and 124-126 contribute to the phosphate site; that span reads GTR.

The protein belongs to the RNase PH family. As to quaternary structure, homohexameric ring arranged as a trimer of dimers.

The enzyme catalyses tRNA(n+1) + phosphate = tRNA(n) + a ribonucleoside 5'-diphosphate. Functionally, phosphorolytic 3'-5' exoribonuclease that plays an important role in tRNA 3'-end maturation. Removes nucleotide residues following the 3'-CCA terminus of tRNAs; can also add nucleotides to the ends of RNA molecules by using nucleoside diphosphates as substrates, but this may not be physiologically important. Probably plays a role in initiation of 16S rRNA degradation (leading to ribosome degradation) during starvation. This Agrobacterium fabrum (strain C58 / ATCC 33970) (Agrobacterium tumefaciens (strain C58)) protein is Ribonuclease PH.